The sequence spans 279 residues: Alcohol dehydrogenase-related 31 kDa protein (279 aa).

11 to 34 is an NAD(+) binding site; the sequence is YVADCGGIALETSKVLMTKNIAKL. Ser139 contacts substrate. Tyr152 functions as the Proton acceptor in the catalytic mechanism.

The protein belongs to the short-chain dehydrogenases/reductases (SDR) family.

This Drosophila guanche (Fruit fly) protein is Alcohol dehydrogenase-related 31 kDa protein (Adhr).